The chain runs to 464 residues: uncharacterized protein (464 aa).

A signal peptide spans 1–24; it reads MSRFVPRIIPFYLLLLVAGGTANA.

This sequence belongs to the intimin/invasin family.

The protein localises to the periplasm. This is an uncharacterized protein from Escherichia coli (strain K12).